The chain runs to 370 residues: Dual-specificity RNA methyltransferase RlmN (370 aa).

Glu93 (proton acceptor) is an active-site residue. Positions 99-337 constitute a Radical SAM core domain; that stretch reads AEGRGTLCVS…VTTVRKTRGD (239 aa). A disulfide bridge links Cys106 with Cys343. 3 residues coordinate [4Fe-4S] cluster: Cys113, Cys117, and Cys120. S-adenosyl-L-methionine-binding positions include 167 to 168, Ser199, 221 to 223, and Asn300; these read GE and SLH. Cys343 serves as the catalytic S-methylcysteine intermediate.

This sequence belongs to the radical SAM superfamily. RlmN family. It depends on [4Fe-4S] cluster as a cofactor.

The protein resides in the cytoplasm. It catalyses the reaction adenosine(2503) in 23S rRNA + 2 reduced [2Fe-2S]-[ferredoxin] + 2 S-adenosyl-L-methionine = 2-methyladenosine(2503) in 23S rRNA + 5'-deoxyadenosine + L-methionine + 2 oxidized [2Fe-2S]-[ferredoxin] + S-adenosyl-L-homocysteine. The catalysed reaction is adenosine(37) in tRNA + 2 reduced [2Fe-2S]-[ferredoxin] + 2 S-adenosyl-L-methionine = 2-methyladenosine(37) in tRNA + 5'-deoxyadenosine + L-methionine + 2 oxidized [2Fe-2S]-[ferredoxin] + S-adenosyl-L-homocysteine. In terms of biological role, specifically methylates position 2 of adenine 2503 in 23S rRNA and position 2 of adenine 37 in tRNAs. m2A2503 modification seems to play a crucial role in the proofreading step occurring at the peptidyl transferase center and thus would serve to optimize ribosomal fidelity. This Francisella tularensis subsp. tularensis (strain FSC 198) protein is Dual-specificity RNA methyltransferase RlmN.